Reading from the N-terminus, the 467-residue chain is MAKLRTLFDKIWDAHLVDVQDDGTCLIYIDRHMVHEVTSPQAFEGLEMSGRKVRHPELTLAVADHNVPTTDRSKGIENEESRIQVETLEANAKKFGVEYLRMDDIRQGVVHIVGPEQGFTLPGTTIVCGDSHTATHGAFGSLAFGIGTSEVEHVLATQTLVQKPAKNMRITVTGKPGPGVTAKDIVLAIIGKIGTAGGTGYVVEFAGEAIRDLSMEGRMTVCNMTIEAGARAGLVAPDEKTFAYIAGKPRSPKGAAFEAAVSYWKTLFTDEGAHFDAEVTLDASTLVPQITWGTSPEDVIAITGTVPNPADIKDEAKRKAVERSLDYMGLTAGMKATDIAIDVVFIGSCTNGRIEDFRAAAEIFKGRKVAASVQALIVPGSGLVKEQAEQEGLDKIFIEAGAEWREPGCSMCLAMNADQLKPGQRSASTSNRNFEGRQGRGGRTHLVSPAMAAAAAITGKLTDVRSL.

[4Fe-4S] cluster is bound by residues cysteine 349, cysteine 409, and cysteine 412. Residues 422 to 443 (PGQRSASTSNRNFEGRQGRGGR) form a disordered region.

The protein belongs to the aconitase/IPM isomerase family. LeuC type 1 subfamily. As to quaternary structure, heterodimer of LeuC and LeuD. Requires [4Fe-4S] cluster as cofactor.

The enzyme catalyses (2R,3S)-3-isopropylmalate = (2S)-2-isopropylmalate. The protein operates within amino-acid biosynthesis; L-leucine biosynthesis; L-leucine from 3-methyl-2-oxobutanoate: step 2/4. Functionally, catalyzes the isomerization between 2-isopropylmalate and 3-isopropylmalate, via the formation of 2-isopropylmaleate. The polypeptide is 3-isopropylmalate dehydratase large subunit (Paramagnetospirillum magneticum (strain ATCC 700264 / AMB-1) (Magnetospirillum magneticum)).